A 104-amino-acid chain; its full sequence is UPF0145 protein HCH_01985 (104 aa).

The protein belongs to the UPF0145 family.

The protein is UPF0145 protein HCH_01985 of Hahella chejuensis (strain KCTC 2396).